The following is a 377-amino-acid chain: NAC domain-containing protein 76 (377 aa).

The NAC domain maps to 10-159 (VPPGFRFHPT…GWVVCRAFKK (150 aa)). The DNA-binding element occupies 110-165 (IGMRKTLVFYKGRAPNGQKTDWIMHEYRLESDENAPPQEEGWVVCRAFKKKPMTGQ). The tract at residues 312–347 (GVSGFGGHHEEDNNKIGHYNNEESNNKGSVETASST) is disordered. The segment covering 318–336 (GHHEEDNNKIGHYNNEESN) has biased composition (basic and acidic residues). The span at 337 to 347 (NKGSVETASST) shows a compositional bias: polar residues.

It belongs to the plant vascular related NAC-domain protein family. As to quaternary structure, interacts with NAC030/VND7. As to expression, detected in root protoxylem and metaxylem poles and in vessels of protoxylems, outermost metaxylems, inner metaxylems, shoots and hypocotyls. Expressed in roots, hypocotyls, cotyledons and leaves. Present in developing xylems. Specifically expressed in vessels but not in interfascicular fibers in stems.

The protein localises to the nucleus. Functionally, transcription activator that binds to the secondary wall NAC binding element (SNBE), 5'-(T/A)NN(C/T)(T/C/G)TNNNNNNNA(A/C)GN(A/C/T)(A/T)-3', in the promoter of target genes. Involved in xylem formation by promoting the expression of secondary wall-associated transcription factors and of genes involved in secondary wall biosynthesis and programmed cell death, genes driven by the secondary wall NAC binding element (SNBE). Triggers thickening of secondary walls. This chain is NAC domain-containing protein 76, found in Arabidopsis thaliana (Mouse-ear cress).